Reading from the N-terminus, the 610-residue chain is DNA mismatch repair protein MutL (610 aa).

The protein belongs to the DNA mismatch repair MutL/HexB family.

Functionally, this protein is involved in the repair of mismatches in DNA. It is required for dam-dependent methyl-directed DNA mismatch repair. May act as a 'molecular matchmaker', a protein that promotes the formation of a stable complex between two or more DNA-binding proteins in an ATP-dependent manner without itself being part of a final effector complex. This chain is DNA mismatch repair protein MutL, found in Rickettsia canadensis (strain McKiel).